The sequence spans 245 residues: Heavy metal-associated isoprenylated plant protein 1 (245 aa).

The 65-residue stretch at 28 to 92 (PVHVVLKIDF…KLQKKSKKKV (65 aa)) folds into the HMA 1 domain. A metal cation-binding residues include cysteine 39 and cysteine 42. The interval 91–113 (KVELISPKPKKDTKENNEKKAND) is disordered. A compositionally biased stretch (basic and acidic residues) spans 99-113 (PKKDTKENNEKKAND). Residues 121–188 (VTTVVLKVNC…KLKKTVQVVP (68 aa)) form the HMA 2 domain. A metal cation-binding residues include cysteine 132 and cysteine 135. Residue cysteine 242 is modified to Cysteine methyl ester. The S-farnesyl cysteine moiety is linked to residue cysteine 242. The propeptide at 243–245 (SVM) is removed in mature form.

This sequence belongs to the HIPP family.

In terms of biological role, heavy-metal-binding protein. This chain is Heavy metal-associated isoprenylated plant protein 1, found in Arabidopsis thaliana (Mouse-ear cress).